Here is a 405-residue protein sequence, read N- to C-terminus: Argininosuccinate synthase (405 aa).

Residues 10–18 and Ala-37 contribute to the ATP site; that span reads AYSGGLDTS. Positions 88 and 93 each coordinate L-citrulline. An ATP-binding site is contributed by Gly-118. L-aspartate-binding residues include Thr-120, Asn-124, and Asp-125. Asn-124 is an L-citrulline binding site. 5 residues coordinate L-citrulline: Arg-128, Ser-179, Ser-188, Glu-264, and Tyr-276.

This sequence belongs to the argininosuccinate synthase family. Type 1 subfamily. As to quaternary structure, homotetramer.

Its subcellular location is the cytoplasm. The enzyme catalyses L-citrulline + L-aspartate + ATP = 2-(N(omega)-L-arginino)succinate + AMP + diphosphate + H(+). Its pathway is amino-acid biosynthesis; L-arginine biosynthesis; L-arginine from L-ornithine and carbamoyl phosphate: step 2/3. This Pseudomonas fluorescens (strain SBW25) protein is Argininosuccinate synthase.